We begin with the raw amino-acid sequence, 431 residues long: L-cysteine:1D-myo-inositol 2-amino-2-deoxy-alpha-D-glucopyranoside ligase (431 aa).

C44 provides a ligand contact to Zn(2+). L-cysteinyl-5'-AMP contacts are provided by residues 44 to 47 (CGIT), T59, and 82 to 84 (NVT). Residues 46-56 (ITPYDATHLGH) carry the 'HIGH' region motif. Positions 187–192 (ERGGDP) match the 'ERGGDP' region motif. L-cysteinyl-5'-AMP is bound at residue W227. Position 231 (C231) interacts with Zn(2+). L-cysteinyl-5'-AMP is bound at residue 249-251 (GND). Residue H256 coordinates Zn(2+). I283 contributes to the L-cysteinyl-5'-AMP binding site. Positions 289–293 (KMSKS) match the 'KMSKS' region motif.

Belongs to the class-I aminoacyl-tRNA synthetase family. MshC subfamily. Monomer. The cofactor is Zn(2+).

The enzyme catalyses 1D-myo-inositol 2-amino-2-deoxy-alpha-D-glucopyranoside + L-cysteine + ATP = 1D-myo-inositol 2-(L-cysteinylamino)-2-deoxy-alpha-D-glucopyranoside + AMP + diphosphate + H(+). Its function is as follows. Catalyzes the ATP-dependent condensation of GlcN-Ins and L-cysteine to form L-Cys-GlcN-Ins. This is L-cysteine:1D-myo-inositol 2-amino-2-deoxy-alpha-D-glucopyranoside ligase from Stackebrandtia nassauensis (strain DSM 44728 / CIP 108903 / NRRL B-16338 / NBRC 102104 / LLR-40K-21).